Here is a 504-residue protein sequence, read N- to C-terminus: Anaerobic nitric oxide reductase transcription regulator NorR (504 aa).

A 4-aspartylphosphate modification is found at D57. Positions 187–416 (MIGLSPGMTQ…LEHAIHRAVV (230 aa)) constitute a Sigma-54 factor interaction domain. ATP is bound by residues 215 to 222 (GETGTGKE) and 278 to 287 (ADNGTLFLDE). The segment at residues 479-498 (WAASARMLETDVANLHRLAK) is a DNA-binding region (H-T-H motif).

It participates in nitrogen metabolism; nitric oxide reduction. Its function is as follows. Required for the expression of anaerobic nitric oxide (NO) reductase, acts as a transcriptional activator for at least the norVW operon. Activation also requires sigma-54. The sequence is that of Anaerobic nitric oxide reductase transcription regulator NorR from Escherichia coli (strain SMS-3-5 / SECEC).